A 615-amino-acid chain; its full sequence is Isocitrate dehydrogenase kinase/phosphatase (615 aa).

ATP-binding positions include alanine 328–leucine 334 and lysine 349. Residue aspartate 384 is part of the active site. Residues alanine 595–alanine 615 are disordered.

This sequence belongs to the AceK family.

It localises to the cytoplasm. The enzyme catalyses L-seryl-[isocitrate dehydrogenase] + ATP = O-phospho-L-seryl-[isocitrate dehydrogenase] + ADP + H(+). Functionally, bifunctional enzyme which can phosphorylate or dephosphorylate isocitrate dehydrogenase (IDH) on a specific serine residue. This is a regulatory mechanism which enables bacteria to bypass the Krebs cycle via the glyoxylate shunt in response to the source of carbon. When bacteria are grown on glucose, IDH is fully active and unphosphorylated, but when grown on acetate or ethanol, the activity of IDH declines drastically concomitant with its phosphorylation. The chain is Isocitrate dehydrogenase kinase/phosphatase from Cupriavidus taiwanensis (strain DSM 17343 / BCRC 17206 / CCUG 44338 / CIP 107171 / LMG 19424 / R1) (Ralstonia taiwanensis (strain LMG 19424)).